Here is a 413-residue protein sequence, read N- to C-terminus: Alpha-ketoglutarate-dependent xanthine dioxygenase xan1 (413 aa).

Residues Met-1–Thr-18 are compositionally biased toward low complexity. Residues Met-1–Pro-24 are disordered. The Fe cation site is built by His-183 and Asp-185. Positions 228 and 362 each coordinate 2-oxoglutarate. His-377 serves as a coordination point for Fe cation. Arg-389 contributes to the 2-oxoglutarate binding site.

Belongs to the TfdA dioxygenase family. The cofactor is Fe(2+).

The protein localises to the cytoplasm. Its subcellular location is the cytosol. The catalysed reaction is xanthine + 2-oxoglutarate + O2 = urate + succinate + CO2. Its function is as follows. Alpha-ketoglutarate-dependent xanthine dioxygenase is a non-heme mononuclear Fe(2+) enzyme that decarboxylates alpha-ketoglutarate to succinate and CO(2) while hydroxylating xanthine to generate uric acid. Allows xanthine utilization as a nitrogen source. This chain is Alpha-ketoglutarate-dependent xanthine dioxygenase xan1 (xan1), found in Schizosaccharomyces pombe (strain 972 / ATCC 24843) (Fission yeast).